The primary structure comprises 162 residues: MNVYEGSLVGTGLKAALVVARFNSLVTEQLLVGAADALRRHGVADGDVDVFRCPGTFELPAVLRRVVATGRYDAVVALGAVIRGGTPHFEYVSAEVTKGVAHVAMEAGCAVAMGVLTCDSMEQALERAGVKAGNKGAEAAAAAVEQANVLRAIARAPARKAE.

5-amino-6-(D-ribitylamino)uracil contacts are provided by residues Phe22, 56–58 (TFE), and 80–82 (AVI). Residue 85-86 (GT) coordinates (2S)-2-hydroxy-3-oxobutyl phosphate. Catalysis depends on His88, which acts as the Proton donor. Residue Met113 coordinates 5-amino-6-(D-ribitylamino)uracil. Arg127 serves as a coordination point for (2S)-2-hydroxy-3-oxobutyl phosphate.

This sequence belongs to the DMRL synthase family.

It carries out the reaction (2S)-2-hydroxy-3-oxobutyl phosphate + 5-amino-6-(D-ribitylamino)uracil = 6,7-dimethyl-8-(1-D-ribityl)lumazine + phosphate + 2 H2O + H(+). It participates in cofactor biosynthesis; riboflavin biosynthesis; riboflavin from 2-hydroxy-3-oxobutyl phosphate and 5-amino-6-(D-ribitylamino)uracil: step 1/2. In terms of biological role, catalyzes the formation of 6,7-dimethyl-8-ribityllumazine by condensation of 5-amino-6-(D-ribitylamino)uracil with 3,4-dihydroxy-2-butanone 4-phosphate. This is the penultimate step in the biosynthesis of riboflavin. This Anaeromyxobacter dehalogenans (strain 2CP-C) protein is 6,7-dimethyl-8-ribityllumazine synthase.